Reading from the N-terminus, the 307-residue chain is 4-hydroxybenzoate geranyltransferase 1 (307 aa).

The next 8 membrane-spanning stretches (helical) occupy residues 38-58 (PIGS…AADL), 62-82 (PKML…GCTI), 120-140 (LFIG…LAIV), 154-174 (ITYW…LLGS), 179-199 (GSVV…WTLV), 230-250 (MWIS…GLIL), 252-272 (IGLP…WQIF), and 286-306 (FVSN…GRLF).

Belongs to the UbiA prenyltransferase family. It depends on Mg(2+) as a cofactor. In terms of tissue distribution, expressed only in roots.

The protein localises to the endoplasmic reticulum membrane. The catalysed reaction is 4-hydroxybenzoate + (2E)-geranyl diphosphate = 3-geranyl-4-hydroxybenzoate + diphosphate. Its function is as follows. Prenyltransferase involved in the biosynthesis of shikonin, a naphthoquinone secondary metabolite. Could accept only geranyl diphosphate and not dimethylallyl diphosphate, farnesyl diphosphate, or geranylgeranyl diphosphate as substrate. This Lithospermum erythrorhizon (Purple gromwell) protein is 4-hydroxybenzoate geranyltransferase 1 (PGT-1).